The sequence spans 197 residues: Imidazoleglycerol-phosphate dehydratase (197 aa).

This sequence belongs to the imidazoleglycerol-phosphate dehydratase family.

Its subcellular location is the cytoplasm. It carries out the reaction D-erythro-1-(imidazol-4-yl)glycerol 3-phosphate = 3-(imidazol-4-yl)-2-oxopropyl phosphate + H2O. The protein operates within amino-acid biosynthesis; L-histidine biosynthesis; L-histidine from 5-phospho-alpha-D-ribose 1-diphosphate: step 6/9. The protein is Imidazoleglycerol-phosphate dehydratase of Methanocaldococcus jannaschii (strain ATCC 43067 / DSM 2661 / JAL-1 / JCM 10045 / NBRC 100440) (Methanococcus jannaschii).